Here is a 261-residue protein sequence, read N- to C-terminus: MARGPKKHLKRLAAPHHWLLDKLSGCYAPRPSAGPHKLRESLPLIVFLRNRLKYALNGREVKAILMQRHVKVDGKVRTDTTYPAGFMDVITLDATNENFRLVYDVKGRFAVHRITDEEASYKLGKVKKVQLGKKGVPYVVTHDGRTIRYPDPNIKVNDTVKIDLASGKITDFIKFDAGKLVYVTGGRNLGRIGTIVHKERHDGGFDLVHIKDSLDNTFVTRLNNVFVIGEQGKPYISLPKGKGIKLSIAEERDRRRAQQGL.

Ser32 bears the Phosphoserine mark. The 64-residue stretch at 42–105 (LPLIVFLRNR…NENFRLVYDV (64 aa)) folds into the S4 RNA-binding domain. Lys62 participates in a covalent cross-link: Glycyl lysine isopeptide (Lys-Gly) (interchain with G-Cter in ubiquitin). At Thr115 the chain carries Phosphothreonine. Residues Lys134, Lys161, Lys168, Lys174, Lys179, Lys211, and Lys233 each participate in a glycyl lysine isopeptide (Lys-Gly) (interchain with G-Cter in ubiquitin) cross-link. Ser247 carries the phosphoserine modification.

The protein belongs to the eukaryotic ribosomal protein eS4 family. Component of the small ribosomal subunit (SSU). Mature yeast ribosomes consist of a small (40S) and a large (60S) subunit. The 40S small subunit contains 1 molecule of ribosomal RNA (18S rRNA) and 33 different proteins (encoded by 57 genes). The large 60S subunit contains 3 rRNA molecules (25S, 5.8S and 5S rRNA) and 46 different proteins (encoded by 81 genes).

The protein localises to the cytoplasm. Functionally, component of the ribosome, a large ribonucleoprotein complex responsible for the synthesis of proteins in the cell. The small ribosomal subunit (SSU) binds messenger RNAs (mRNAs) and translates the encoded message by selecting cognate aminoacyl-transfer RNA (tRNA) molecules. The large subunit (LSU) contains the ribosomal catalytic site termed the peptidyl transferase center (PTC), which catalyzes the formation of peptide bonds, thereby polymerizing the amino acids delivered by tRNAs into a polypeptide chain. The nascent polypeptides leave the ribosome through a tunnel in the LSU and interact with protein factors that function in enzymatic processing, targeting, and the membrane insertion of nascent chains at the exit of the ribosomal tunnel. The polypeptide is Small ribosomal subunit protein eS4B (Saccharomyces cerevisiae (strain ATCC 204508 / S288c) (Baker's yeast)).